We begin with the raw amino-acid sequence, 266 residues long: MGEGHRLPVASPRVAAIVPAAGRGERLGGGTPKALRALGGRPMLVRTVESLRRSRLVTQIVVAAPPTLVDAVAQLLGGDVYVIAGGAERVDSVRRALRAVDDDVSVVLVHDAARPLTPPELVDAVAAAVLDGHPAVIPVVPLADTVKEVDADGRVVRTPPRDGLRAVQTPQGFRRDVLSAAYALEDIAVTDDAGLVEALGVPVTTIPGAQEAFKVTRPADLVLAEALLARCDPADDARSAEARSAEARSEEPQFAGARSTDARSGG.

The span at 234-251 shows a compositional bias: basic and acidic residues; that stretch reads ADDARSAEARSAEARSEE. Residues 234–266 are disordered; that stretch reads ADDARSAEARSAEARSEEPQFAGARSTDARSGG.

This sequence belongs to the IspD/TarI cytidylyltransferase family. IspD subfamily.

The catalysed reaction is 2-C-methyl-D-erythritol 4-phosphate + CTP + H(+) = 4-CDP-2-C-methyl-D-erythritol + diphosphate. The protein operates within isoprenoid biosynthesis; isopentenyl diphosphate biosynthesis via DXP pathway; isopentenyl diphosphate from 1-deoxy-D-xylulose 5-phosphate: step 2/6. Its function is as follows. Catalyzes the formation of 4-diphosphocytidyl-2-C-methyl-D-erythritol from CTP and 2-C-methyl-D-erythritol 4-phosphate (MEP). The chain is 2-C-methyl-D-erythritol 4-phosphate cytidylyltransferase from Frankia casuarinae (strain DSM 45818 / CECT 9043 / HFP020203 / CcI3).